A 170-amino-acid chain; its full sequence is Ribosome maturation factor RimM (170 aa).

A PRC barrel domain is found at 98–170 (EGQYYWADLE…RIELDWDPDF (73 aa)).

This sequence belongs to the RimM family. As to quaternary structure, binds ribosomal protein uS19.

It localises to the cytoplasm. An accessory protein needed during the final step in the assembly of 30S ribosomal subunit, possibly for assembly of the head region. Essential for efficient processing of 16S rRNA. May be needed both before and after RbfA during the maturation of 16S rRNA. It has affinity for free ribosomal 30S subunits but not for 70S ribosomes. In Alkalilimnicola ehrlichii (strain ATCC BAA-1101 / DSM 17681 / MLHE-1), this protein is Ribosome maturation factor RimM.